The chain runs to 164 residues: UPF0304 protein YfbU (164 aa).

Belongs to the UPF0304 family.

This Escherichia coli O127:H6 (strain E2348/69 / EPEC) protein is UPF0304 protein YfbU.